We begin with the raw amino-acid sequence, 194 residues long: Large ribosomal subunit protein uL5 (194 aa).

The protein belongs to the universal ribosomal protein uL5 family. Part of the 50S ribosomal subunit; part of the 5S rRNA/L5/L18/L25 subcomplex. Contacts the 5S rRNA and the P site tRNA. Forms a bridge to the 30S subunit in the 70S ribosome.

This is one of the proteins that bind and probably mediate the attachment of the 5S RNA into the large ribosomal subunit, where it forms part of the central protuberance. In the 70S ribosome it contacts protein S13 of the 30S subunit (bridge B1b), connecting the 2 subunits; this bridge is implicated in subunit movement. Contacts the P site tRNA; the 5S rRNA and some of its associated proteins might help stabilize positioning of ribosome-bound tRNAs. The chain is Large ribosomal subunit protein uL5 from Chlorobium luteolum (strain DSM 273 / BCRC 81028 / 2530) (Pelodictyon luteolum).